The primary structure comprises 325 residues: GMP reductase (325 aa).

The active-site Thioimidate intermediate is the Cys-174. Residue 203-226 (LIADGGIRTHGDIAKSIRFGASMV) coordinates NADP(+).

This sequence belongs to the IMPDH/GMPR family. GuaC type 2 subfamily.

The enzyme catalyses IMP + NH4(+) + NADP(+) = GMP + NADPH + 2 H(+). Catalyzes the irreversible NADPH-dependent deamination of GMP to IMP. It functions in the conversion of nucleobase, nucleoside and nucleotide derivatives of G to A nucleotides, and in maintaining the intracellular balance of A and G nucleotides. The polypeptide is GMP reductase (Staphylococcus aureus (strain bovine RF122 / ET3-1)).